The following is a 499-amino-acid chain: MVLAELGGSISRALQQMSNATIIDEKVLNECLNEITRALLQADVQFKLVRDMTTNIKKIVNLDDLAAGHNKRRIIQQAVFNELCKILDPGKPSFTPKKGKPSIVMFVGLQGSGKTTTCTKYAYYHQKKGWKPALVCADTFRAGAFDQLKQNATKAKIPFYGSYTESDPVKIAVDGVETFKKENCDLIIVDTSGRHKQEAALFEEMRQVAEATKPDLVIFVMDSSIGQAAFDQAQAFKQSVAVGAVIVTKMDGHAKGGGALSAVAATKSPVIFIGTGEHMDEFEVFDVKPFVSRLLGMGDWSGFMDKIHEVVPMDQQPELLQKLSEGHFTLRIMYEQFQNILKMGPIGQVFSMLPGFSAELMPKGRENESQAKIKRYMTMMDSMTNEELDSSNPKLMTDSRIMRIARGSGRQVHEVMDMMEEYKRLAKIWSKMKGLKIPKKGEMSALSRNMNAQHMSKVLPPQMLKQIGGMGGLQNLMKQMGSAKDMMGGMGGMFGGGDK.

Residues 1–295 are G-domain; the sequence is MVLAELGGSI…DVKPFVSRLL (295 aa). Residues 108-115, 190-194, and 248-251 contribute to the GTP site; these read GLQGSGKT, DTSGR, and TKMD. An M-domain region spans residues 296 to 499; sequence GMGDWSGFMD…MGGMFGGGDK (204 aa).

The protein belongs to the GTP-binding SRP family. SRP54 subfamily. In terms of assembly, component of a signal recognition particle (SRP) complex that consists of a 7SL RNA molecule of 300 nucleotides and six protein subunits: SRP72, SRP68, SRP54, SRP19, SRP14 and SRP9.

Its subcellular location is the cytoplasm. It localises to the endoplasmic reticulum. The enzyme catalyses GTP + H2O = GDP + phosphate + H(+). In terms of biological role, component of the signal recognition particle (SRP) complex, a ribonucleoprotein complex that mediates the cotranslational targeting of secretory and membrane proteins to the endoplasmic reticulum (ER). As part of the SRP complex, associates with the SRP receptor (SR) component SRPRA to target secretory proteins to the endoplasmic reticulum membrane. Binds to the signal sequence of presecretory proteins when they emerge from the ribosomes. Displays basal GTPase activity, and stimulates reciprocal GTPase activation of the SR subunit SRPRA. Forms a guanosine 5'-triphosphate (GTP)-dependent complex with the SR subunit SRPRA. SR compaction and GTPase mediated rearrangement of SR drive SRP-mediated cotranslational protein translocation into the ER. Requires the presence of SRP9/SRP14 and/or SRP19 to stably interact with RNA. This chain is Signal recognition particle subunit SRP54 2, found in Solanum lycopersicum (Tomato).